We begin with the raw amino-acid sequence, 382 residues long: Carbamoyl phosphate synthase small chain (382 aa).

The CPSase stretch occupies residues 1–189; the sequence is MIKSALLVLE…GLPEAKSEDD (189 aa). 3 residues coordinate L-glutamine: Ser-47, Gly-241, and Gly-243. The region spanning 193–380 is the Glutamine amidotransferase type-1 domain; the sequence is HVVAYDFGAK…IELIEQYRQS (188 aa). Cys-269 acts as the Nucleophile in catalysis. Leu-270, Gln-273, Asn-311, Gly-313, and Phe-314 together coordinate L-glutamine. Active-site residues include His-353 and Glu-355.

This sequence belongs to the CarA family. As to quaternary structure, composed of two chains; the small (or glutamine) chain promotes the hydrolysis of glutamine to ammonia, which is used by the large (or ammonia) chain to synthesize carbamoyl phosphate. Tetramer of heterodimers (alpha,beta)4.

It carries out the reaction hydrogencarbonate + L-glutamine + 2 ATP + H2O = carbamoyl phosphate + L-glutamate + 2 ADP + phosphate + 2 H(+). It catalyses the reaction L-glutamine + H2O = L-glutamate + NH4(+). It participates in amino-acid biosynthesis; L-arginine biosynthesis; carbamoyl phosphate from bicarbonate: step 1/1. It functions in the pathway pyrimidine metabolism; UMP biosynthesis via de novo pathway; (S)-dihydroorotate from bicarbonate: step 1/3. Its function is as follows. Small subunit of the glutamine-dependent carbamoyl phosphate synthetase (CPSase). CPSase catalyzes the formation of carbamoyl phosphate from the ammonia moiety of glutamine, carbonate, and phosphate donated by ATP, constituting the first step of 2 biosynthetic pathways, one leading to arginine and/or urea and the other to pyrimidine nucleotides. The small subunit (glutamine amidotransferase) binds and cleaves glutamine to supply the large subunit with the substrate ammonia. The sequence is that of Carbamoyl phosphate synthase small chain from Salmonella typhimurium (strain LT2 / SGSC1412 / ATCC 700720).